A 310-amino-acid polypeptide reads, in one-letter code: UDP-N-acetylenolpyruvoylglucosamine reductase (310 aa).

The FAD-binding PCMH-type domain maps to 30-200 (RVGGPAQWLA…VAAEFQLEPG (171 aa)). Arg-179 is a catalytic residue. Catalysis depends on Ser-230, which acts as the Proton donor. Glu-300 is an active-site residue.

This sequence belongs to the MurB family. FAD is required as a cofactor.

It is found in the cytoplasm. The enzyme catalyses UDP-N-acetyl-alpha-D-muramate + NADP(+) = UDP-N-acetyl-3-O-(1-carboxyvinyl)-alpha-D-glucosamine + NADPH + H(+). It participates in cell wall biogenesis; peptidoglycan biosynthesis. In terms of biological role, cell wall formation. The sequence is that of UDP-N-acetylenolpyruvoylglucosamine reductase from Synechococcus sp. (strain WH7803).